A 147-amino-acid polypeptide reads, in one-letter code: Ubiquitin-conjugating enzyme E2 D2 (147 aa).

The region spanning 1-147 is the UBC core domain; sequence MALKRIHKEL…AREWTQKYAM (147 aa). The active-site Glycyl thioester intermediate is the Cys-85.

The protein belongs to the ubiquitin-conjugating enzyme family. As to quaternary structure, interacts with SCF (SKP1-CUL1-F-box protein) E3 ubiquitin ligase complex. Interacts with CNOT4 (via RING domain). Interacts with E3 ubiquitin-protein ligases CBLC, PJA1 and PJA2. Interacts with PDZRN3. Interacts with PPP1R11. Interacts with E3 ubiquitin-protein ligase PHF7; the interaction inhibits cleavage of PHF7 and promotes association of the complex with the nucleosome core particle.

It carries out the reaction S-ubiquitinyl-[E1 ubiquitin-activating enzyme]-L-cysteine + [E2 ubiquitin-conjugating enzyme]-L-cysteine = [E1 ubiquitin-activating enzyme]-L-cysteine + S-ubiquitinyl-[E2 ubiquitin-conjugating enzyme]-L-cysteine.. The catalysed reaction is S-ubiquitinyl-[E1 ubiquitin-activating enzyme]-L-cysteine + [acceptor protein]-L-lysine = [E1 ubiquitin-activating enzyme]-L-cysteine + N(6)-monoubiquitinyl-[acceptor protein]-L-lysine.. It participates in protein modification; protein ubiquitination. Accepts ubiquitin from the E1 complex and catalyzes its covalent attachment to other proteins. In vitro catalyzes 'Lys-48'-linked polyubiquitination. Mediates the selective degradation of short-lived and abnormal proteins. Functions in the E6/E6-AP-induced ubiquitination of p53/TP53. Mediates ubiquitination of PEX5 and SQSTM1 and autoubiquitination of STUB1 and TRAF6. Involved in the signal-induced conjugation and subsequent degradation of NFKBIA, FBXW2-mediated GCM1 ubiquitination and degradation, MDM2-dependent degradation of p53/TP53 and the activation of MAVS in the mitochondria by RIGI in response to viral infection. Essential for viral activation of IRF3. This Bos taurus (Bovine) protein is Ubiquitin-conjugating enzyme E2 D2 (UBE2D2).